Consider the following 459-residue polypeptide: Cysteine--tRNA ligase (459 aa).

C28 lines the Zn(2+) pocket. Residues 30-40 carry the 'HIGH' region motif; that stretch reads VTVYDLCHIGH. Positions 209, 234, and 238 each coordinate Zn(2+). A 'KMSKS' region motif is present at residues 266 to 270; the sequence is KMSKS. Position 269 (K269) interacts with ATP.

The protein belongs to the class-I aminoacyl-tRNA synthetase family. As to quaternary structure, monomer. Requires Zn(2+) as cofactor.

Its subcellular location is the cytoplasm. It carries out the reaction tRNA(Cys) + L-cysteine + ATP = L-cysteinyl-tRNA(Cys) + AMP + diphosphate. The polypeptide is Cysteine--tRNA ligase (cysS) (Haemophilus influenzae (strain ATCC 51907 / DSM 11121 / KW20 / Rd)).